Consider the following 156-residue polypeptide: Translation initiation factor IF-1, chloroplastic (156 aa).

The transit peptide at 1-81 directs the protein to the chloroplast; that stretch reads MASLSWWNPA…RRTTSIQCLS (81 aa). The interval 51 to 79 is disordered; the sequence is KSLLVKTQQQSKKKKNNSTNSRRTTSIQC. Over residues 67-76 the composition is skewed to low complexity; sequence NSTNSRRTTS. Residues 82 to 151 form the S1-like domain; that stretch reads QEQKWTHEGS…SKGRIIYRLR (70 aa).

It belongs to the IF-1 family. In terms of assembly, component of the 30S ribosomal translation pre-initiation complex which assembles on the 30S ribosome in the order IF-2 and IF-3, IF-1 and N-formylmethionyl-tRNA(fMet); mRNA recruitment can occur at any time during PIC assembly.

The protein resides in the plastid. It is found in the chloroplast. In terms of biological role, one of the essential components for the initiation of protein synthesis. Stabilizes the binding of IF-2 and IF-3 on the 30S subunit to which N-formylmethionyl-tRNA(fMet) subsequently binds. Helps modulate mRNA selection, yielding the 30S pre-initiation complex (PIC). Upon addition of the 50S ribosomal subunit IF-1, IF-2 and IF-3 are released leaving the mature 70S translation initiation complex. This Solanum lycopersicum (Tomato) protein is Translation initiation factor IF-1, chloroplastic (infA).